Reading from the N-terminus, the 193-residue chain is Pyridoxal 5'-phosphate synthase subunit PdxT (193 aa).

50 to 52 (GES) lines the L-glutamine pocket. Cysteine 82 serves as the catalytic Nucleophile. L-glutamine contacts are provided by residues arginine 109 and 136–137 (IR). Residues histidine 172 and glutamate 174 each act as charge relay system in the active site.

Belongs to the glutaminase PdxT/SNO family. As to quaternary structure, in the presence of PdxS, forms a dodecamer of heterodimers. Only shows activity in the heterodimer.

It carries out the reaction aldehydo-D-ribose 5-phosphate + D-glyceraldehyde 3-phosphate + L-glutamine = pyridoxal 5'-phosphate + L-glutamate + phosphate + 3 H2O + H(+). It catalyses the reaction L-glutamine + H2O = L-glutamate + NH4(+). It functions in the pathway cofactor biosynthesis; pyridoxal 5'-phosphate biosynthesis. Catalyzes the hydrolysis of glutamine to glutamate and ammonia as part of the biosynthesis of pyridoxal 5'-phosphate. The resulting ammonia molecule is channeled to the active site of PdxS. This chain is Pyridoxal 5'-phosphate synthase subunit PdxT, found in Streptococcus pneumoniae (strain JJA).